The following is a 361-amino-acid chain: Peptide chain release factor 1 (361 aa).

Residue Q236 is modified to N5-methylglutamine.

This sequence belongs to the prokaryotic/mitochondrial release factor family. Methylated by PrmC. Methylation increases the termination efficiency of RF1.

Its subcellular location is the cytoplasm. In terms of biological role, peptide chain release factor 1 directs the termination of translation in response to the peptide chain termination codons UAG and UAA. This is Peptide chain release factor 1 from Lactobacillus acidophilus (strain ATCC 700396 / NCK56 / N2 / NCFM).